The primary structure comprises 58 residues: MGKVHGSLARAGKVKNQTPKVPKLDKKKRLTGRAKKRQLYNRRFSDNGGRKKGPNSKA.

The disordered stretch occupies residues 1–58 (MGKVHGSLARAGKVKNQTPKVPKLDKKKRLTGRAKKRQLYNRRFSDNGGRKKGPNSKA). Residues 25–40 (DKKKRLTGRAKKRQLY) are compositionally biased toward basic residues.

The protein belongs to the eukaryotic ribosomal protein eS30 family. In terms of assembly, component of the small ribosomal subunit. Mature ribosomes consist of a small (40S) and a large (60S) subunit. The 40S subunit contains about 32 different proteins and 1 molecule of RNA (18S). The 60S subunit contains about 42 different proteins and 3 molecules of RNA (28S, 5.8S and 5S).

The protein resides in the cytoplasm. Its function is as follows. Component of the ribosome, a large ribonucleoprotein complex responsible for the synthesis of proteins in the cell. The small ribosomal subunit (SSU) binds messenger RNAs (mRNAs) and translates the encoded message by selecting cognate aminoacyl-transfer RNA (tRNA) molecules. The large subunit (LSU) contains the ribosomal catalytic site termed the peptidyl transferase center (PTC), which catalyzes the formation of peptide bonds, thereby polymerizing the amino acids delivered by tRNAs into a polypeptide chain. The nascent polypeptides leave the ribosome through a tunnel in the LSU and interact with protein factors that function in enzymatic processing, targeting, and the membrane insertion of nascent chains at the exit of the ribosomal tunnel. This chain is Small ribosomal subunit protein eS30, found in Plasmodium falciparum (isolate 3D7).